Consider the following 190-residue polypeptide: Putative glutathione-dependent formaldehyde-activating enzyme (190 aa).

Residues 19 to 165 (FKGGKLYCHC…FRKEGLQTYD (147 aa)) enclose the CENP-V/GFA domain. Zn(2+) contacts are provided by Cys26, Cys28, Cys47, Cys49, Cys52, Cys94, and Cys97.

Belongs to the Gfa family. Zn(2+) serves as cofactor.

The catalysed reaction is S-(hydroxymethyl)glutathione = glutathione + formaldehyde. The protein operates within one-carbon metabolism; formaldehyde degradation; formate from formaldehyde (glutathione route): step 1/3. Catalyzes the condensation of formaldehyde and glutathione to S-hydroxymethylglutathione. The polypeptide is Putative glutathione-dependent formaldehyde-activating enzyme (Phaeosphaeria nodorum (strain SN15 / ATCC MYA-4574 / FGSC 10173) (Glume blotch fungus)).